Consider the following 98-residue polypeptide: Putative pterin-4-alpha-carbinolamine dehydratase (98 aa).

The protein belongs to the pterin-4-alpha-carbinolamine dehydratase family.

It carries out the reaction (4aS,6R)-4a-hydroxy-L-erythro-5,6,7,8-tetrahydrobiopterin = (6R)-L-erythro-6,7-dihydrobiopterin + H2O. In Roseobacter denitrificans (strain ATCC 33942 / OCh 114) (Erythrobacter sp. (strain OCh 114)), this protein is Putative pterin-4-alpha-carbinolamine dehydratase.